Consider the following 214-residue polypeptide: Adenylate kinase (214 aa).

10-15 (GAGKGT) provides a ligand contact to ATP. The NMP stretch occupies residues 30–59 (STGDMLRAAVKAGSELGKQAKAIMDAGKLV). AMP contacts are provided by residues Thr-31, Arg-36, 57–59 (KLV), 85–88 (GFPR), and Gln-92. An LID region spans residues 122 to 159 (GRRVHPGSGRVYHVKFNPPQVEGKDDVTGEDLMTRKDD). ATP contacts are provided by residues Arg-123 and 132 to 133 (VY). 2 residues coordinate AMP: Arg-156 and Arg-167. An ATP-binding site is contributed by Gln-200.

Belongs to the adenylate kinase family. As to quaternary structure, monomer.

It localises to the cytoplasm. It catalyses the reaction AMP + ATP = 2 ADP. It participates in purine metabolism; AMP biosynthesis via salvage pathway; AMP from ADP: step 1/1. Catalyzes the reversible transfer of the terminal phosphate group between ATP and AMP. Plays an important role in cellular energy homeostasis and in adenine nucleotide metabolism. This is Adenylate kinase from Edwardsiella ictaluri (strain 93-146).